Consider the following 648-residue polypeptide: Golgin subfamily A member 8G (648 aa).

Residues 1–11 show a composition bias toward pro residues; sequence MWPQARLPPHP. Disordered regions lie at residues 1–84 and 119–139; these read MWPQ…SATL and NKQVEHQLEEEKKANNEKQKA. The segment covering 50-62 has biased composition (polar residues); that stretch reads TNGSIHETATSGG. 3 coiled-coil regions span residues 105-160, 223-275, and 318-424; these read VSQL…LNTD, LEQS…MSQE, and EVEL…QQKQ. The span at 121 to 139 shows a compositional bias: basic and acidic residues; that stretch reads QVEHQLEEEKKANNEKQKA. 4 disordered regions span residues 356-376, 434-461, 508-549, and 600-624; these read LREQEERLQEQQERLPEQEER, ALPGEGDGGGHLDSEGEEAPRPIPSIPQ, PITK…GVAA, and PVQGEAREGSPHDNPTAQPIVQDHQ. Positions 441–453 are enriched in basic and acidic residues; the sequence is GGGHLDSEGEEAP. Positions 521–534 are enriched in gly residues; sequence PGGGHHQAGPGQGG.

The protein belongs to the GOLGA8 family.

This Homo sapiens (Human) protein is Golgin subfamily A member 8G.